Consider the following 355-residue polypeptide: Lipoyl synthase (355 aa).

One can recognise an RPE1 insert domain in the interval 7 to 55; sequence HLSKFAYREEFAGNTEVLATAAYKEDCADASTGLTPKLPLEVEFGKMSK. The [4Fe-4S] cluster site is built by C86, C91, C97, C112, C116, C119, and S325. Residues 98 to 314 form the Radical SAM core domain; the sequence is WSKKHATVMI…ERVARTKGFL (217 aa).

It belongs to the radical SAM superfamily. Lipoyl synthase family. It depends on [4Fe-4S] cluster as a cofactor.

The protein localises to the cytoplasm. The enzyme catalyses [[Fe-S] cluster scaffold protein carrying a second [4Fe-4S](2+) cluster] + N(6)-octanoyl-L-lysyl-[protein] + 2 oxidized [2Fe-2S]-[ferredoxin] + 2 S-adenosyl-L-methionine + 4 H(+) = [[Fe-S] cluster scaffold protein] + N(6)-[(R)-dihydrolipoyl]-L-lysyl-[protein] + 4 Fe(3+) + 2 hydrogen sulfide + 2 5'-deoxyadenosine + 2 L-methionine + 2 reduced [2Fe-2S]-[ferredoxin]. It participates in protein modification; protein lipoylation via endogenous pathway; protein N(6)-(lipoyl)lysine from octanoyl-[acyl-carrier-protein]: step 2/2. Its function is as follows. Catalyzes the radical-mediated insertion of two sulfur atoms into the C-6 and C-8 positions of the octanoyl moiety bound to the lipoyl domains of lipoate-dependent enzymes, thereby converting the octanoylated domains into lipoylated derivatives. The chain is Lipoyl synthase from Rickettsia bellii (strain RML369-C).